Consider the following 433-residue polypeptide: Protein translocase subunit SecD (433 aa).

A run of 6 helical transmembrane segments spans residues 7–27, 257–277, 278–298, 300–320, 354–374, and 380–400; these read LAFL…GPKI, LIAG…AYRM, AGLI…LTFA, LHVV…GIAV, TIVD…IFGG, and GFAV…VLFA.

The protein belongs to the SecD/SecF family. SecD subfamily. As to quaternary structure, forms a complex with SecF. Part of the essential Sec protein translocation apparatus which comprises SecA, SecYEG and auxiliary proteins SecDF. Other proteins may also be involved.

The protein resides in the cell membrane. In terms of biological role, part of the Sec protein translocase complex. Interacts with the SecYEG preprotein conducting channel. SecDF uses the proton motive force (PMF) to complete protein translocation after the ATP-dependent function of SecA. This is Protein translocase subunit SecD from Alicyclobacillus acidocaldarius subsp. acidocaldarius (strain ATCC 27009 / DSM 446 / BCRC 14685 / JCM 5260 / KCTC 1825 / NBRC 15652 / NCIMB 11725 / NRRL B-14509 / 104-IA) (Bacillus acidocaldarius).